A 119-amino-acid polypeptide reads, in one-letter code: uncharacterized protein (119 aa).

An intrachain disulfide couples cysteine 9 to cysteine 12.

This sequence belongs to the ArsC family.

This is an uncharacterized protein from Streptomyces viridochromogenes.